The primary structure comprises 732 residues: Polyribonucleotide nucleotidyltransferase (732 aa).

Residues Asp-489 and Asp-495 each contribute to the Mg(2+) site. Residues 556–615 (PKIDTIQIDVDKIKIVIGKGGETIDKIIAETGVKIDIDEEGLVQIFSSDQAAIDRTKEII) enclose the KH domain. One can recognise an S1 motif domain in the interval 625–693 (GEVYHAKVVR…DKGRVDASMK (69 aa)). A disordered region spans residues 691–732 (SMKALIPRPPKPEKKEEKASEAKEASNDQASKSQSETASEEK). A compositionally biased stretch (basic and acidic residues) spans 700–716 (PKPEKKEEKASEAKEAS). Over residues 717–732 (NDQASKSQSETASEEK) the composition is skewed to polar residues.

This sequence belongs to the polyribonucleotide nucleotidyltransferase family. The cofactor is Mg(2+).

It localises to the cytoplasm. The enzyme catalyses RNA(n+1) + phosphate = RNA(n) + a ribonucleoside 5'-diphosphate. In terms of biological role, involved in mRNA degradation. Catalyzes the phosphorolysis of single-stranded polyribonucleotides processively in the 3'- to 5'-direction. This Streptococcus uberis (strain ATCC BAA-854 / 0140J) protein is Polyribonucleotide nucleotidyltransferase.